The chain runs to 249 residues: Small ribosomal subunit protein uS3 (249 aa).

The KH type-2 domain maps to 39 to 107 (VRAMLKKRLY…EVHLNIVEIR (69 aa)). The segment at 215–249 (LDKRLATESGPAGEGGGRERGDRPDRGDRGRRDRG) is disordered. Basic and acidic residues predominate over residues 230–249 (GGRERGDRPDRGDRGRRDRG).

It belongs to the universal ribosomal protein uS3 family. Part of the 30S ribosomal subunit. Forms a tight complex with proteins S10 and S14.

Its function is as follows. Binds the lower part of the 30S subunit head. Binds mRNA in the 70S ribosome, positioning it for translation. This is Small ribosomal subunit protein uS3 from Caulobacter sp. (strain K31).